Consider the following 144-residue polypeptide: Deoxyuridine 5'-triphosphate nucleotidohydrolase (144 aa).

Substrate contacts are provided by residues 63–65, asparagine 76, and 80–82; these read RSG and TID.

Belongs to the dUTPase family. Mg(2+) is required as a cofactor.

It carries out the reaction dUTP + H2O = dUMP + diphosphate + H(+). The protein operates within pyrimidine metabolism; dUMP biosynthesis; dUMP from dCTP (dUTP route): step 2/2. Functionally, this enzyme is involved in nucleotide metabolism: it produces dUMP, the immediate precursor of thymidine nucleotides and it decreases the intracellular concentration of dUTP so that uracil cannot be incorporated into DNA. The protein is Deoxyuridine 5'-triphosphate nucleotidohydrolase of Porphyromonas gingivalis (strain ATCC BAA-308 / W83).